Here is a 354-residue protein sequence, read N- to C-terminus: Green-sensitive opsin-3 (354 aa).

The Extracellular segment spans residues 1 to 39 (MSGLNGFEGDNFYIPMSNRTGLVRDPFVYEQYYLAEPWQ). An N-linked (GlcNAc...) asparagine glycan is attached at asparagine 18. Residues 40–64 (FKLLACYMFFLICLGLPINGFTLFV) traverse the membrane as a helical segment. Residues 65-76 (TAQHKKLQQPLN) are Cytoplasmic-facing. Residues 77–102 (FILVNLAVAGMIMVCFGFTITISSAV) form a helical membrane-spanning segment. Over 103 to 116 (NGYFYFGPTACAIE) the chain is Extracellular. Cysteine 113 and cysteine 190 are joined by a disulfide. A helical membrane pass occupies residues 117-136 (GFMATLGGEVALWSLVVLAI). The Cytoplasmic portion of the chain corresponds to 137-155 (ERYIVVCKPMGSFKFSASH). A helical transmembrane segment spans residues 156–179 (ALGGIGFTWFMAMTCAAPPLVGWS). Over 180-205 (RYIPEGLQCSCGPDYYTLNPKYNNES) the chain is Extracellular. N-linked (GlcNAc...) asparagine glycosylation occurs at asparagine 203. A helical membrane pass occupies residues 206-233 (YVIYMFVVHFIVPVTVIFFTYGRLVCTV). The Cytoplasmic segment spans residues 234–255 (KSAAAAQQDSASTQKAEKEVTR). The chain crosses the membrane as a helical span at residues 256–279 (MVILMVVGFLVAWTPYATVAAWIF). Topologically, residues 280–287 (FNKGAAFT) are extracellular. Residues 288–312 (AQFMAVPAFFSKSSALFNPIIYVLL) form a helical membrane-spanning segment. At lysine 299 the chain carries N6-(retinylidene)lysine. At 313-354 (NKQFRNCMLTTLFCGKNPLGDEESSTVSTKTEVSTVSSVSPA) the chain is on the cytoplasmic side.

It belongs to the G-protein coupled receptor 1 family. Opsin subfamily. As to expression, the color pigments are found in the cone photoreceptor cells.

It is found in the membrane. Its function is as follows. Visual pigments are the light-absorbing molecules that mediate vision. They consist of an apoprotein, opsin, covalently linked to cis-retinal. This chain is Green-sensitive opsin-3 (RH11), found in Psalidodon fasciatus (Banded astyanax).